We begin with the raw amino-acid sequence, 538 residues long: Lipid scramblase CLPTM1L (538 aa).

The Cytoplasmic segment spans residues Met1–Ser10. A helical transmembrane segment spans residues Leu11–Val31. Residues Tyr32–Leu284 lie on the Extracellular side of the membrane. Residues Asn91, Asn101, and Asn229 are each glycosylated (N-linked (GlcNAc...) asparagine). Residues Tyr285–Phe305 traverse the membrane as a helical segment. The Cytoplasmic portion of the chain corresponds to Lys306 to Lys324. Residues Ala325–Asp342 form a helical membrane-spanning segment. At Glu343 to Ser346 the chain is on the extracellular side. A helical membrane pass occupies residues Leu347–Val364. Over Lys365–Lys402 the chain is Cytoplasmic. The helical transmembrane segment at Tyr403 to Ile423 threads the bilayer. Over Lys424 to Trp428 the chain is Extracellular. Residues Tyr429–Leu449 form a helical membrane-spanning segment. The Cytoplasmic segment spans residues Pro450 to Asp538.

It belongs to the CLPTM1 family. Ubiquitously expressed.

It localises to the endoplasmic reticulum membrane. It carries out the reaction a 6-(alpha-D-glucosaminyl)-1-(1,2-diacyl-sn-glycero-3-phospho)-1D-myo-inositol(in) = a 6-(alpha-D-glucosaminyl)-1-(1,2-diacyl-sn-glycero-3-phospho)-1D-myo-inositol(out). The enzyme catalyses 6-(alpha-D-glucosaminyl)-(1-octadecanoyl,2-(9Z)-octadecenoyl-sn-glycero-3-phospho)-1D-myo-inositol(in) = 6-(alpha-D-glucosaminyl)-(1-octadecanoyl,2-(9Z)-octadecenoyl-sn-glycero-3-phospho)-1D-myo-inositol(out). The catalysed reaction is a 1,2-diacyl-sn-glycero-3-phospho-(1D-myo-inositol)(in) = a 1,2-diacyl-sn-glycero-3-phospho-(1D-myo-inositol)(out). It catalyses the reaction a 1,2-diacyl-sn-glycero-3-phosphocholine(in) = a 1,2-diacyl-sn-glycero-3-phosphocholine(out). It carries out the reaction a 1,2-diacyl-sn-glycero-3-phosphoethanolamine(in) = a 1,2-diacyl-sn-glycero-3-phosphoethanolamine(out). In terms of biological role, scramblase that mediates the translocation of glucosaminylphosphatidylinositol (alpha-D-GlcN-(1-6)-(1,2-diacyl-sn-glycero-3-phospho)-1D-myo-inositol, GlcN-PI) across the endoplasmic reticulum (ER) membrane, from the cytosolic leaflet to the luminal leaflet of the ER membrane, where it participates in the biosynthesis of glycosylphosphatidylinositol (GPI). GPI is a lipid glycoconjugate involved in post-translational modification of proteins. Can also translocate 1,2-diacyl-sn-glycero-3-phospho-(1D-myo-inositol) (phosphatidylinositol or PI), as well as several other phospholipids (1,2-diacyl-sn-glycero-3-phosphocholine, 1,2-diacyl-sn-glycero-3-phosphoethanolamine), and N-acetylglucosaminylphosphatidylinositol (GlcNAc-PI) in vitro. This Homo sapiens (Human) protein is Lipid scramblase CLPTM1L (CLPTM1L).